Consider the following 122-residue polypeptide: RxLR effector protein Avh52 (122 aa).

A signal peptide spans 1–21 (MRLTSILVLVIAATFHTTGTA). The short motif at 50–68 (RLLRRVEKDKVDYEQDEQR) is the RxLR-dEER element. Residues 69–86 (SFGALKDAVKKLNPVTAV) are TAP1-binding. The interval 87-98 (KKFFKQRAKRKK) is nuclear localization signal (NLS).

This sequence belongs to the RxLR effector family. Interacts with host acetyl transferase TAP1.

It is found in the secreted. The protein resides in the host nucleus. Its function is as follows. Effector that suppresses plant defense responses during the early stages of pathogen infection. Suppresses cell death induced by effectors and PAMPs in plant hosts. Interacts with host acetyltransferase TAP1 and causes TAP1 relocation into the nucleus where it acetylates histones H2A and H3 during early infection, thereby promoting susceptibility of host plant to P.sojae. This chain is RxLR effector protein Avh52, found in Phytophthora sojae (strain P6497) (Soybean stem and root rot agent).